Here is a 121-residue protein sequence, read N- to C-terminus: Putative iron-sulfur cluster insertion protein ErpA (121 aa).

Iron-sulfur cluster-binding residues include Cys-49, Cys-113, and Cys-115.

It belongs to the HesB/IscA family. As to quaternary structure, homodimer. Iron-sulfur cluster serves as cofactor.

Required for insertion of 4Fe-4S clusters. The chain is Putative iron-sulfur cluster insertion protein ErpA from Methylibium petroleiphilum (strain ATCC BAA-1232 / LMG 22953 / PM1).